Here is a 177-residue protein sequence, read N- to C-terminus: Large ribosomal subunit protein uL10 (177 aa).

The protein belongs to the universal ribosomal protein uL10 family. Part of the ribosomal stalk of the 50S ribosomal subunit. The N-terminus interacts with L11 and the large rRNA to form the base of the stalk. The C-terminus forms an elongated spine to which L12 dimers bind in a sequential fashion forming a multimeric L10(L12)X complex.

Functionally, forms part of the ribosomal stalk, playing a central role in the interaction of the ribosome with GTP-bound translation factors. The chain is Large ribosomal subunit protein uL10 from Leptospira interrogans serogroup Icterohaemorrhagiae serovar copenhageni (strain Fiocruz L1-130).